Reading from the N-terminus, the 275-residue chain is Polyamine aminopropyltransferase (275 aa).

One can recognise a PABS domain in the interval 2 to 235; sequence DLWLREGQIE…GFWSFTIGSK (234 aa). Position 31 (Gln-31) interacts with S-methyl-5'-thioadenosine. Residues His-62 and Asp-86 each contribute to the spermidine site. Residues Glu-106 and 137–138 each bind S-methyl-5'-thioadenosine; that span reads DG. The active-site Proton acceptor is Asp-155. 155–158 contributes to the spermidine binding site; that stretch reads DSTD.

Belongs to the spermidine/spermine synthase family. As to quaternary structure, homodimer or homotetramer.

The protein resides in the cytoplasm. The enzyme catalyses S-adenosyl 3-(methylsulfanyl)propylamine + putrescine = S-methyl-5'-thioadenosine + spermidine + H(+). It functions in the pathway amine and polyamine biosynthesis; spermidine biosynthesis; spermidine from putrescine: step 1/1. Catalyzes the irreversible transfer of a propylamine group from the amino donor S-adenosylmethioninamine (decarboxy-AdoMet) to putrescine (1,4-diaminobutane) to yield spermidine. The protein is Polyamine aminopropyltransferase of Clostridium kluyveri (strain NBRC 12016).